We begin with the raw amino-acid sequence, 172 residues long: R-phycocyanin beta subunit (172 aa).

The residue at position 72 (Asn72) is an N4-methylasparagine. Cys82 lines the (2R,3E)-phycocyanobilin pocket. Residue Cys153 coordinates (2R,3E)-phycoerythrobilin.

Belongs to the phycobiliprotein family. Heterodimer of an alpha and a beta subunit, which further assembles into trimers and the trimers into hexamers. Post-translationally, contains two covalently linked bilin chromophores.

The protein localises to the cellular thylakoid membrane. Light-harvesting photosynthetic bile pigment-protein from the phycobiliprotein complex (phycobilisome, PBS). Phycocyanin is the major phycobiliprotein in the PBS rod. In Synechococcus sp. (strain WH7803), this protein is R-phycocyanin beta subunit (rpcB).